A 425-amino-acid chain; its full sequence is Histidine--tRNA ligase (425 aa).

This sequence belongs to the class-II aminoacyl-tRNA synthetase family. Homodimer.

Its subcellular location is the cytoplasm. The catalysed reaction is tRNA(His) + L-histidine + ATP = L-histidyl-tRNA(His) + AMP + diphosphate + H(+). The chain is Histidine--tRNA ligase from Aeromonas salmonicida (strain A449).